The following is a 33-amino-acid chain: pyr operon leader peptide (33 aa).

This chain is pyr operon leader peptide (pyrL), found in Salmonella typhi.